The chain runs to 867 residues: MKPYVLKFQEIRPHSEALVGGKGMNLGACSNIEGVHVPAGFCLTTEAYKRTLAENNEFTQLLQRLSSLKTSDMDAIREISETIRTLIQHTQIPSEIASYMDATLLDVGGYEMPFAVRSSATAEDLPHASFAGQHDTYLNIIGKDALLQHISMCWASLFTERAIIYRIQNQFDHRKVQLAVVIQQMISPEASGILFTADPITSNRKSLSIDASFGLGEALVSGLVSADSYTVRENTITNKIIATKKLAIYSLKEGGTETRILEKSQQTKQTLTDQQIIQLAKLGRKIEAYFGKPQDIEWCLAEGAFYIVQSRPITTLYPIPEVNEPGNRVYISVAHQQMMTDAMKPLGLSFYLMTTPATMYTAGGRLFVDITQSLSAKVSRDMMVNSLGQSDPLIKDALLTVINKKGFLPPLPTEENPSHATVSGKPPVRSIPDSSSVFELVRNSENSIKHLKQSIETKSGSDLFDFIVEDLEELKRVLFNPTSIDAIMAGMDASAWLNEHIYQWLGEKNVADKLSESAPNNITSQMGLELLDVADVIRPYPAVRAYLEQTKNPDFMNELATLEGGAETKKALEDYLQKYGMRCAGEIDLTKTRWIENPLTLIPLILSNIKNFDSGASMHKFAQGEKEAFHKEQEILRRLQELPDGEQKAMETKEKIDILRHFIGYREYPKYGMINRYFIYKLALLRAGEQLVKDGILQEQEDIYFLYFEELREVVRTGQVDYELINVRKRDFATFEKLTPPRILTSDGEMINGEYKRENLPKDAILGLPVSSGTVEGRARVILDMEKADLEDGDILVTAYTDPSWTPAFVSIKGLVTEVGGLMTHGAVIAREYGLPAVVGVENATTIIKDGQQIRINGTEGYIEILD.

The ATP-binding stretch occupies residues methionine 1–threonine 314. Residues lysine 22, arginine 117, glycine 132, threonine 136, glutamine 183, glutamate 297, glutamine 309, and arginine 311 each coordinate ATP. The segment at asparagine 327–glutamate 754 is rifampicin-binding. The rifampicin site is built by glutamine 336 and tyrosine 351. The tract at residues glycine 767 to isoleucine 865 is swivel phosphohistidine. Histidine 825 acts as the Tele-phosphohistidine intermediate in catalysis.

Belongs to the rifampicin phosphotransferase family.

It catalyses the reaction rifampicin + ATP + H2O = 21-phosphorifampicin + AMP + phosphate + 2 H(+). Catalyzes the phosphorylation of rifampicin, also known as rifampin (RIF), leading to its inactivation. Confers high level resistance to a variety of clinically used rifamycin antibiotics. Does not show phosphoenolpyruvate (PEP) synthase activity. The chain is Rifampicin phosphotransferase from Listeria monocytogenes serotype 4b (strain F2365).